Reading from the N-terminus, the 60-residue chain is Mastoparan-VT4 (60 aa).

The signal sequence occupies residues M1–A27. AXPX repeat units lie at residues A27–K30, A31–L34, A35–N38, and A41–E44. Residues D28 to A45 constitute a propeptide that is removed on maturation. L59 bears the Leucine amide mark.

The protein belongs to the MCD family. Mastoparan subfamily. In terms of tissue distribution, expressed by the venom gland.

It localises to the secreted. The synthetic peptide shows antimicrobial activities against Gram-negative bacteria (but not against all strains tested), Gram-positive bacteria (not all strains tested) and the fungi C.albicans and C.parapsilosis. Exhibits little hemolytic activity against washed human erythrocytes. This Vespa tropica (Greater banded hornet) protein is Mastoparan-VT4.